The following is a 478-amino-acid chain: Probable cyclin-dependent kinase 9 (478 aa).

The span at M1 to R17 shows a compositional bias: polar residues. Positions M1 to N55 are disordered. The segment covering P22–K32 has biased composition (basic and acidic residues). A Protein kinase domain is found at Y85–F413. Residues I91–V99 and K114 each bind ATP. D217 (proton acceptor) is an active-site residue. The tract at residues H444–F478 is disordered. Residues Q451–P464 are compositionally biased toward low complexity.

This sequence belongs to the protein kinase superfamily. CMGC Ser/Thr protein kinase family. CDC2/CDKX subfamily. Associates with cyclin-T (cit-1.1 or cit-1.2) to form P-TEFb.

The protein localises to the nucleus. It carries out the reaction L-seryl-[protein] + ATP = O-phospho-L-seryl-[protein] + ADP + H(+). The catalysed reaction is L-threonyl-[protein] + ATP = O-phospho-L-threonyl-[protein] + ADP + H(+). It catalyses the reaction [DNA-directed RNA polymerase] + ATP = phospho-[DNA-directed RNA polymerase] + ADP + H(+). Functionally, essential member of the cyclin-dependent kinase pair (CDK9/cyclin-T) complex, also called positive transcription elongation factor B (P-TEFb), which is proposed to facilitate the transition from abortive to production elongation by phosphorylating the CTD (C-terminal domain) of the large subunit of RNA polymerase II (RNAP II) and spt-5. In Caenorhabditis elegans, this protein is Probable cyclin-dependent kinase 9 (cdk-9).